Reading from the N-terminus, the 543-residue chain is Aluminum-activated malate transporter 14 (543 aa).

Transmembrane regions (helical) follow at residues 56 to 76, 80 to 100, 106 to 126, 129 to 149, 164 to 184, and 191 to 211; these read VGVS…FKGI, AIWA…ATLC, GLGT…ANDS, IFRA…ITYL, LIFL…DTVI, and FYTI…VFPI. A disordered region spans residues 416–438; sequence DTNEAASYQNTGTPRGERMSRFG. Positions 419–428 are enriched in polar residues; sequence EAASYQNTGT. Residues 445–472 are a coiled coil; it reads RLRADTLERRSAAATNERKILRQQLSRI.

This sequence belongs to the aromatic acid exporter (TC 2.A.85) family.

The protein localises to the membrane. Malate transporter. This chain is Aluminum-activated malate transporter 14 (ALMT14), found in Arabidopsis thaliana (Mouse-ear cress).